A 212-amino-acid chain; its full sequence is Tubulin alpha chain (212 aa).

Asn-3 and Asn-25 together coordinate GTP. Glu-51 is an active-site residue.

Belongs to the tubulin family. As to quaternary structure, dimer of alpha and beta chains. A typical microtubule is a hollow water-filled tube with an outer diameter of 25 nm and an inner diameter of 15 nM. Alpha-beta heterodimers associate head-to-tail to form protofilaments running lengthwise along the microtubule wall with the beta-tubulin subunit facing the microtubule plus end conferring a structural polarity. Microtubules usually have 13 protofilaments but different protofilament numbers can be found in some organisms and specialized cells. Mg(2+) is required as a cofactor.

Its subcellular location is the cytoplasm. The protein resides in the cytoskeleton. It carries out the reaction GTP + H2O = GDP + phosphate + H(+). Functionally, tubulin is the major constituent of microtubules, a cylinder consisting of laterally associated linear protofilaments composed of alpha- and beta-tubulin heterodimers. Microtubules grow by the addition of GTP-tubulin dimers to the microtubule end, where a stabilizing cap forms. Below the cap, tubulin dimers are in GDP-bound state, owing to GTPase activity of alpha-tubulin. This chain is Tubulin alpha chain (TUB-A), found in Pneumocystis carinii.